The primary structure comprises 366 residues: Neuropeptide Y receptor type 1 (366 aa).

Residues 1-39 (MNFSTYFENLSVPNNISGNITFPISEDCALPLPMIFTLA) are Extracellular-facing. Residues Asn2, Asn9, and Asn15 are each glycosylated (N-linked (GlcNAc...) asparagine). Residues 40-60 (LAYGAVIILGLSGNLALIIII) form a helical membrane-spanning segment. Residues 61–82 (LKQKEMRNVTNILIVNLSFSDL) are Cytoplasmic-facing. Residues 83–103 (LATIMCLPFTLIYTLMDHWIF) form a helical membrane-spanning segment. The Extracellular segment spans residues 104–111 (GEVMCKLN). The cysteines at positions 108 and 193 are disulfide-linked. A helical transmembrane segment spans residues 112 to 132 (EYIQCVSVTVSIFSLVLIAIE). The Cytoplasmic segment spans residues 133–149 (RHQLIINPRGWRPNNRH). A helical membrane pass occupies residues 150–170 (ACFGITVIWGFAMACSTPLMM). The Extracellular segment spans residues 171-203 (YSVLTDEPFKNISLDSYIGKYVCLEDFPEDKFR). Asn181 is a glycosylation site (N-linked (GlcNAc...) asparagine). A helical membrane pass occupies residues 204–224 (LSYTTLLFILQYLGPLCFIFV). Topologically, residues 225-260 (CYTKIFLRLKRRNNMMDKIRDNKYRSSETKRINIML) are cytoplasmic. The chain crosses the membrane as a helical span at residues 261–281 (LSIVVGFALCWLPFFIFNLVF). Residues 282–294 (DWNHEAVATCNHN) lie on the Extracellular side of the membrane. A helical transmembrane segment spans residues 295–315 (LLFLICHLTAMISTCVNPIFY). Topologically, residues 316 to 366 (GFLNKNFQRDLQFFFNFCDFRSREDDYETIAMSTMHTDVSKTSLKQASPIA) are cytoplasmic. The S-palmitoyl cysteine moiety is linked to residue Cys333.

Belongs to the G-protein coupled receptor 1 family.

It localises to the cell membrane. Its function is as follows. Receptor for neuropeptide Y and peptide YY. The chain is Neuropeptide Y receptor type 1 (npy1r) from Xenopus laevis (African clawed frog).